The sequence spans 227 residues: Small ribosomal subunit protein uS3 (227 aa).

The region spanning 39–109 is the KH type-2 domain; sequence IHRFFEKLTR…KIVINVDAVD (71 aa).

This sequence belongs to the universal ribosomal protein uS3 family. In terms of assembly, part of the 30S ribosomal subunit. Forms a tight complex with proteins S10 and S14.

In terms of biological role, binds the lower part of the 30S subunit head. Binds mRNA in the 70S ribosome, positioning it for translation. The sequence is that of Small ribosomal subunit protein uS3 from Mesomycoplasma hyopneumoniae (strain 232) (Mycoplasma hyopneumoniae).